A 108-amino-acid polypeptide reads, in one-letter code: MEPRFLLFSLLFVVFLQPALVFNMVLGYILGYLIKKNYARLKVMFLTNTFEQPEEDDIHVSDEKNPFEGIDPDVSKHLKTLGLDTSLDGEDLEYLQRFWESMSNTKKK.

Residues 5-25 traverse the membrane as a helical segment; it reads FLLFSLLFVVFLQPALVFNMV.

It belongs to the nanovirus U4 protein family.

Its subcellular location is the membrane. This chain is Protein U4 (DNA-U4), found in Astragalus sinicus (Chinese milk vetch).